A 171-amino-acid chain; its full sequence is O-acetyl-ADP-ribose deacetylase 1 (171 aa).

The 171-residue stretch at 1–171 folds into the Macro domain; the sequence is MKKITVIQGD…NYDLYLKLLN (171 aa). Substrate is bound by residues 10-11, Asn-24, 32-34, and 121-125; these read DI, GVD, and STGIY. The active-site Proton acceptor is Asp-34.

This sequence belongs to the MacroD-type family. YmdB subfamily. Homodimer. Interacts with RNase III.

It carries out the reaction 3''-O-acetyl-ADP-D-ribose + H2O = ADP-D-ribose + acetate + H(+). It catalyses the reaction 2''-O-acetyl-ADP-D-ribose + H2O = ADP-D-ribose + acetate + H(+). In terms of biological role, deacetylates O-acetyl-ADP ribose to yield ADP-ribose and free acetate. Down-regulates ribonuclease 3 (RNase III) activity. Acts by interacting directly with the region of the ribonuclease that is required for dimerization/activation. The chain is O-acetyl-ADP-ribose deacetylase 1 from Pantoea vagans (strain C9-1) (Pantoea agglomerans (strain C9-1)).